The following is an 86-amino-acid chain: DNA-directed RNA polymerase subunit Rpo6 (86 aa).

It belongs to the archaeal Rpo6/eukaryotic RPB6 RNA polymerase subunit family. As to quaternary structure, part of the RNA polymerase complex.

The protein resides in the cytoplasm. It carries out the reaction RNA(n) + a ribonucleoside 5'-triphosphate = RNA(n+1) + diphosphate. Functionally, DNA-dependent RNA polymerase (RNAP) catalyzes the transcription of DNA into RNA using the four ribonucleoside triphosphates as substrates. This Sulfurisphaera tokodaii (strain DSM 16993 / JCM 10545 / NBRC 100140 / 7) (Sulfolobus tokodaii) protein is DNA-directed RNA polymerase subunit Rpo6.